The following is a 429-amino-acid chain: Glutamate-1-semialdehyde 2,1-aminomutase 2 (429 aa).

Position 268 is an N6-(pyridoxal phosphate)lysine (K268).

It belongs to the class-III pyridoxal-phosphate-dependent aminotransferase family. HemL subfamily. In terms of assembly, homodimer. The cofactor is pyridoxal 5'-phosphate.

It is found in the cytoplasm. It carries out the reaction (S)-4-amino-5-oxopentanoate = 5-aminolevulinate. The protein operates within porphyrin-containing compound metabolism; protoporphyrin-IX biosynthesis; 5-aminolevulinate from L-glutamyl-tRNA(Glu): step 2/2. The polypeptide is Glutamate-1-semialdehyde 2,1-aminomutase 2 (Bacillus anthracis (strain A0248)).